A 470-amino-acid polypeptide reads, in one-letter code: Small ribosomal subunit protein bS1m (470 aa).

Positions 436–470 (FKKIPMTAARLRGRYENSDSPSSPTMSGSSGYGLR) are disordered. Residues 453–464 (SDSPSSPTMSGS) show a composition bias toward low complexity.

It belongs to the bacterial ribosomal protein bS1 family. Component of the mitochondrial small ribosomal subunit (mt-SSU). Mature N.crassa 74S mitochondrial ribosomes consist of a small (37S) and a large (54S) subunit. The 37S small subunit contains a 16S ribosomal RNA (16S mt-rRNA) and 32 different proteins. The 54S large subunit contains a 23S rRNA (23S mt-rRNA) and 42 different proteins.

The protein resides in the mitochondrion. Functionally, component of the mitochondrial ribosome (mitoribosome), a dedicated translation machinery responsible for the synthesis of mitochondrial genome-encoded proteins, including at least some of the essential transmembrane subunits of the mitochondrial respiratory chain. The mitoribosomes are attached to the mitochondrial inner membrane and translation products are cotranslationally integrated into the membrane. This is Small ribosomal subunit protein bS1m (mrp51) from Neurospora crassa (strain ATCC 24698 / 74-OR23-1A / CBS 708.71 / DSM 1257 / FGSC 987).